A 202-amino-acid chain; its full sequence is Transmembrane 4 L6 family member 4 (202 aa).

The Cytoplasmic portion of the chain corresponds to 1-9 (MCTGGCARC). Residues 10 to 30 (LGGTLIPLAVFGLLANILLFF) traverse the membrane as a helical segment. Topologically, residues 31-48 (PGGKVVNDKSHLSDEVWY) are extracellular. A helical transmembrane segment spans residues 49–69 (FGGILGSGVLMIFPALVFLGL). Over 70–93 (QNNDCCGCCGNEGCGKRFAMFTST) the chain is Cytoplasmic. A helical membrane pass occupies residues 94 to 114 (LFAVIGFLGAGYSFIVSAVSI). Residues 115 to 158 (NKGPKCFMANGTWGYPFHDGDYLKDQALWSECEEPRDVVPWNLT) lie on the Extracellular side of the membrane. An N-linked (GlcNAc...) asparagine glycan is attached at Asn-156. The chain crosses the membrane as a helical span at residues 159 to 179 (LFSILLVIGGIQMVLCAIQVI). Residues 180–202 (NGLLGTLCGDCQCCGCCGGDGPV) are Cytoplasmic-facing.

Belongs to the L6 tetraspanin family.

It is found in the membrane. Its function is as follows. Regulates the adhesive and proliferative status of intestinal epithelial cells. Can mediate density-dependent cell proliferation. The protein is Transmembrane 4 L6 family member 4 (Tm4sf4) of Mus musculus (Mouse).